A 293-amino-acid polypeptide reads, in one-letter code: 4-diphosphocytidyl-2-C-methyl-D-erythritol kinase (293 aa).

Lys-16 is a catalytic residue. 99–109 is an ATP binding site; sequence PMGAGLGGGSS. Asp-141 is an active-site residue.

Belongs to the GHMP kinase family. IspE subfamily.

It catalyses the reaction 4-CDP-2-C-methyl-D-erythritol + ATP = 4-CDP-2-C-methyl-D-erythritol 2-phosphate + ADP + H(+). Its pathway is isoprenoid biosynthesis; isopentenyl diphosphate biosynthesis via DXP pathway; isopentenyl diphosphate from 1-deoxy-D-xylulose 5-phosphate: step 3/6. Its function is as follows. Catalyzes the phosphorylation of the position 2 hydroxy group of 4-diphosphocytidyl-2C-methyl-D-erythritol. This chain is 4-diphosphocytidyl-2-C-methyl-D-erythritol kinase, found in Paraburkholderia phytofirmans (strain DSM 17436 / LMG 22146 / PsJN) (Burkholderia phytofirmans).